The chain runs to 141 residues: Hemoglobin subunit alpha (141 aa).

The Globin domain occupies 1-141 (VLSPTDKTNV…VSTVLTSKYR (141 aa)). The residue at position 3 (S3) is a Phosphoserine. K7 bears the N6-succinyllysine mark. T8 is subject to Phosphothreonine. At K11 the chain carries N6-succinyllysine. The residue at position 24 (Y24) is a Phosphotyrosine. At S35 the chain carries Phosphoserine. Residue K40 is modified to N6-succinyllysine. S49 carries the post-translational modification Phosphoserine. Residue H58 coordinates O2. H87 is a heme b binding site. S102 bears the Phosphoserine mark. Phosphothreonine is present on T108. A Phosphoserine modification is found at S124. Residues T134 and T137 each carry the phosphothreonine modification. Position 138 is a phosphoserine (S138).

The protein belongs to the globin family. Heterotetramer of two alpha chains and two beta chains. As to expression, red blood cells.

In terms of biological role, involved in oxygen transport from the lung to the various peripheral tissues. Hemopressin acts as an antagonist peptide of the cannabinoid receptor CNR1. Hemopressin-binding efficiently blocks cannabinoid receptor CNR1 and subsequent signaling. The polypeptide is Hemoglobin subunit alpha (HBA) (Rhinoceros unicornis (Greater Indian rhinoceros)).